The primary structure comprises 106 residues: Urease subunit beta (106 aa).

The protein belongs to the urease beta subunit family. As to quaternary structure, heterotrimer of UreA (gamma), UreB (beta) and UreC (alpha) subunits. Three heterotrimers associate to form the active enzyme.

The protein localises to the cytoplasm. It catalyses the reaction urea + 2 H2O + H(+) = hydrogencarbonate + 2 NH4(+). The protein operates within nitrogen metabolism; urea degradation; CO(2) and NH(3) from urea (urease route): step 1/1. In Alkalilimnicola ehrlichii (strain ATCC BAA-1101 / DSM 17681 / MLHE-1), this protein is Urease subunit beta.